A 283-amino-acid polypeptide reads, in one-letter code: Urease accessory protein UreD (283 aa).

It belongs to the UreD family. As to quaternary structure, ureD, UreF and UreG form a complex that acts as a GTP-hydrolysis-dependent molecular chaperone, activating the urease apoprotein by helping to assemble the nickel containing metallocenter of UreC. The UreE protein probably delivers the nickel.

Its subcellular location is the cytoplasm. In terms of biological role, required for maturation of urease via the functional incorporation of the urease nickel metallocenter. The chain is Urease accessory protein UreD from Rhodopseudomonas palustris (strain BisB5).